Here is a 225-residue protein sequence, read N- to C-terminus: Germin-like protein 8-3 (225 aa).

Positions 1 to 23 (MASSSLFLLASLLVLASWQQAIA) are cleaved as a signal peptide. An intrachain disulfide couples Cys-33 to Cys-48. 2 N-linked (GlcNAc...) asparagine glycosylation sites follow: Asn-53 and Asn-78. The Cupin type-1 domain maps to 60-213 (FNAAKFDMPR…AFQVEKKVID (154 aa)). The Mn(2+) site is built by His-111, His-113, Glu-118, and His-158.

It belongs to the germin family. In terms of assembly, oligomer (believed to be a pentamer but probably hexamer).

It is found in the secreted. Its subcellular location is the extracellular space. The protein resides in the apoplast. Its function is as follows. Plays a role in broad-spectrum disease resistance. Probably has no oxalate oxidase activity even if the active site is conserved. The sequence is that of Germin-like protein 8-3 (GER2) from Oryza sativa subsp. japonica (Rice).